The primary structure comprises 178 residues: N-alpha-acetyltransferase 20 (178 aa).

The region spanning 2-157 is the N-acetyltransferase domain; it reads TTLRAFTCDD…DAYDMRKALS (156 aa).

It belongs to the acetyltransferase family. ARD1 subfamily. In terms of assembly, component of the N-terminal acetyltransferase B (NatB) complex which is composed of NAA20 and NAA25.

Its subcellular location is the cytoplasm. It is found in the nucleus. The catalysed reaction is N-terminal L-methionyl-L-asparaginyl-[protein] + acetyl-CoA = N-terminal N(alpha)-acetyl-L-methionyl-L-asparaginyl-[protein] + CoA + H(+). It carries out the reaction N-terminal L-methionyl-L-glutaminyl-[protein] + acetyl-CoA = N-terminal N(alpha)-acetyl-L-methionyl-L-glutaminyl-[protein] + CoA + H(+). It catalyses the reaction N-terminal L-methionyl-L-aspartyl-[protein] + acetyl-CoA = N-terminal N(alpha)-acetyl-L-methionyl-L-aspartyl-[protein] + CoA + H(+). The enzyme catalyses N-terminal L-methionyl-L-glutamyl-[protein] + acetyl-CoA = N-terminal N(alpha)-acetyl-L-methionyl-L-glutamyl-[protein] + CoA + H(+). Its function is as follows. Catalytic subunit of the NatB complex which catalyzes acetylation of the N-terminal methionine residues of peptides beginning with Met-Asp, Met-Glu, Met-Asn and Met-Gln. Proteins with cell cycle functions are overrepresented in the pool of NatB substrates. Required for maintaining the structure and function of actomyosin fibers and for proper cellular migration. The sequence is that of N-alpha-acetyltransferase 20 (NAA20) from Homo sapiens (Human).